The sequence spans 314 residues: Oxaloacetate tautomerase FAHD2A, mitochondrial (314 aa).

A mitochondrion-targeting transit peptide spans 1 to 84; sequence MLVSGRRRLL…ATLSVARRAL (84 aa). Mg(2+) contacts are provided by glutamate 159, glutamate 161, and aspartate 190.

Belongs to the FAH family. Mg(2+) serves as cofactor. Requires Mn(2+) as cofactor.

The protein localises to the mitochondrion. The enzyme catalyses oxaloacetate = enol-oxaloacetate. Tautomerase that converts enol-oxaloacetate, a strong inhibitor of succinate dehydrogenase, to the physiological keto form of oxaloacetate. It is thereby required to maximize aerobic respiration efficiency by preventing succinate dehydrogenase inhibition. The polypeptide is Oxaloacetate tautomerase FAHD2A, mitochondrial (Homo sapiens (Human)).